A 431-amino-acid polypeptide reads, in one-letter code: MKILVIGSGGREHALAWKIAQSARVSEVLVAPGNAGTATEAKCRNVAIKVDDLDGLLALAQREAVALTVVGPEVPLVLGVVDRFHAAGLRIFGPTAKAAQLEGSKAFAKDFLARHGIPTAYYAVHTEVDAALAYVREKGTPIVVKADGLAAGKGVIVALTLAEAEDAVRDMLSGNAFGDAGARVVIEEFLDGEEASFISMVDGKHALPMATSQDHKRVGDGDTGPNTGGMGAYSPAPVVTPEVHARVMREVVEPTVQGMIADGVPFTGFLYAGLMIDAHGAPKVIEFNVRFGDPETQPVMLRLQSDLVDLLEAAIDGKLDGAHAQWDPRPSLGVVIAARPYPDTPVTGEVIAGLDAVPASAKVFHAGTALNAAGEVVSAGGRVLCVAALGDSVQDAQRTAYAGLKPIHWSSAFQRSDIGWRAIARERQAQG.

One can recognise an ATP-grasp domain in the interval 109 to 316 (KDFLARHGIP…LVDLLEAAID (208 aa)). An ATP-binding site is contributed by 135–196 (VREKGTPIVV…EEFLDGEEAS (62 aa)). Residues E286 and N288 each contribute to the Mg(2+) site.

Belongs to the GARS family. Requires Mg(2+) as cofactor. The cofactor is Mn(2+).

It carries out the reaction 5-phospho-beta-D-ribosylamine + glycine + ATP = N(1)-(5-phospho-beta-D-ribosyl)glycinamide + ADP + phosphate + H(+). It functions in the pathway purine metabolism; IMP biosynthesis via de novo pathway; N(1)-(5-phospho-D-ribosyl)glycinamide from 5-phospho-alpha-D-ribose 1-diphosphate: step 2/2. This Xanthomonas axonopodis pv. citri (strain 306) protein is Phosphoribosylamine--glycine ligase.